We begin with the raw amino-acid sequence, 494 residues long: MSLLAEDTAAADLGLRWKPGFRALGPAFLTELRPTPLPDPPYWVGHSEAAARLLGLPADWRQSEGTLAALTGNLPVAGTLPFATVYSGHQFGVWAGQLGDGRAIMLGETEGGLEVQLKGAGRTPYSRGADGRAVLRSSIREFLCSEAMHGLGIPTTRALCVTGSDARVYREMPETAAVVTRVAPSFIRFGHFEHFSASQRDAELRALADYVIDRYYPDCRSTSRFNGNAYAAFLEAVSERTAALLAQWQAVGFCHGVMNTDNMSILGLTIDYGPFQFLDGFDPRHICNHSDTSGRYAFNQQPNVAYWNLFCLAQALLPLIGDQEIAVAALESYKTVFPREFESRMRAKLGLAEPAEGDRALIEGVLKLMAAEKVDYTIFWRRLSQHMAGGNAEPVRDLFLDRAGFDAWLLSFSERHAQLPRAQAADLMLRSNPKYVLRNHLGQQAIEAASQKDFSAVATLLALLETPFEEHPGADAYAGFPPDWASTIEISCSS.

Gly-99, Gly-101, Arg-102, Lys-118, Asp-130, Gly-131, Arg-181, and Arg-188 together coordinate ATP. Asp-261 acts as the Proton acceptor in catalysis. Mg(2+)-binding residues include Asn-262 and Asp-271. ATP is bound at residue Asp-271.

Belongs to the SELO family. Mg(2+) serves as cofactor. It depends on Mn(2+) as a cofactor.

It catalyses the reaction L-seryl-[protein] + ATP = 3-O-(5'-adenylyl)-L-seryl-[protein] + diphosphate. It carries out the reaction L-threonyl-[protein] + ATP = 3-O-(5'-adenylyl)-L-threonyl-[protein] + diphosphate. The catalysed reaction is L-tyrosyl-[protein] + ATP = O-(5'-adenylyl)-L-tyrosyl-[protein] + diphosphate. The enzyme catalyses L-histidyl-[protein] + UTP = N(tele)-(5'-uridylyl)-L-histidyl-[protein] + diphosphate. It catalyses the reaction L-seryl-[protein] + UTP = O-(5'-uridylyl)-L-seryl-[protein] + diphosphate. It carries out the reaction L-tyrosyl-[protein] + UTP = O-(5'-uridylyl)-L-tyrosyl-[protein] + diphosphate. Nucleotidyltransferase involved in the post-translational modification of proteins. It can catalyze the addition of adenosine monophosphate (AMP) or uridine monophosphate (UMP) to a protein, resulting in modifications known as AMPylation and UMPylation. The chain is Protein nucleotidyltransferase YdiU from Variovorax paradoxus (strain S110).